A 76-amino-acid polypeptide reads, in one-letter code: MNTATGFIVLLVLATILGGIEAGESHMRKDAMGRVRRQYCVPVDQPCSLNTQPCCDDATCTQERNENGHTVYYCRA.

The first 22 residues, 1–22, serve as a signal peptide directing secretion; the sequence is MNTATGFIVLLVLATILGGIEA. Positions 23 to 35 are excised as a propeptide; sequence GESHMRKDAMGRV. 3 disulfide bridges follow: C40/C55, C47/C60, and C54/C74.

This sequence belongs to the neurotoxin 08 (Shiva) family. 02 (omega/kappa toxin) subfamily. In terms of tissue distribution, expressed by the venom gland.

It localises to the secreted. In terms of biological role, toxin that may inhibit ion channels. This Hadronyche versuta (Blue mountains funnel-web spider) protein is Omega/Kappa-hexatoxin-Hv1h.